Consider the following 213-residue polypeptide: Ribosomal RNA small subunit methyltransferase G (213 aa).

Residues Gly-81, Leu-86, 132–133 (VE), and Arg-147 each bind S-adenosyl-L-methionine.

The protein belongs to the methyltransferase superfamily. RNA methyltransferase RsmG family.

It localises to the cytoplasm. It catalyses the reaction guanosine(527) in 16S rRNA + S-adenosyl-L-methionine = N(7)-methylguanosine(527) in 16S rRNA + S-adenosyl-L-homocysteine. Functionally, specifically methylates the N7 position of guanine in position 527 of 16S rRNA. The chain is Ribosomal RNA small subunit methyltransferase G from Mannheimia succiniciproducens (strain KCTC 0769BP / MBEL55E).